The chain runs to 185 residues: MTVARLRELLPDYARDLRLNLGSVTSQSNLSAQQLWGTVLAAAIASRGRTVLVELEPEALDHLSAEAATAARTAAALMAMNNVYYRSLHLLEDEEYSRLRAGLRMNALANPGVDKVDVELWSLAVSAVNGCGRCLTAHEHELRGRGVAREVIQDAIRVASVVHAVAVTVEALETSSGTNRVAAAD.

C131 functions as the Proton donor in the catalytic mechanism. C131 and C134 are oxidised to a cystine. The active-site Cysteine sulfenic acid (-SOH) intermediate is the C134.

Belongs to the AhpD family. Homotrimer.

It carries out the reaction N(6)-[(R)-dihydrolipoyl]-L-lysyl-[lipoyl-carrier protein] + a hydroperoxide = N(6)-[(R)-lipoyl]-L-lysyl-[lipoyl-carrier protein] + an alcohol + H2O. Its function is as follows. Antioxidant protein with alkyl hydroperoxidase activity. Required for the reduction of the AhpC active site cysteine residues and for the regeneration of the AhpC enzyme activity. In Frankia alni (strain DSM 45986 / CECT 9034 / ACN14a), this protein is Alkyl hydroperoxide reductase AhpD.